The chain runs to 129 residues: Phosphoribosyl-AMP cyclohydrolase (129 aa).

Asp78 serves as a coordination point for Mg(2+). Position 79 (Cys79) interacts with Zn(2+). Asp80 and Asp82 together coordinate Mg(2+). Residues Cys96 and Cys103 each contribute to the Zn(2+) site.

This sequence belongs to the PRA-CH family. As to quaternary structure, homodimer. Requires Mg(2+) as cofactor. It depends on Zn(2+) as a cofactor.

Its subcellular location is the cytoplasm. The catalysed reaction is 1-(5-phospho-beta-D-ribosyl)-5'-AMP + H2O = 1-(5-phospho-beta-D-ribosyl)-5-[(5-phospho-beta-D-ribosylamino)methylideneamino]imidazole-4-carboxamide. Its pathway is amino-acid biosynthesis; L-histidine biosynthesis; L-histidine from 5-phospho-alpha-D-ribose 1-diphosphate: step 3/9. Catalyzes the hydrolysis of the adenine ring of phosphoribosyl-AMP. The polypeptide is Phosphoribosyl-AMP cyclohydrolase (Nitrosomonas europaea (strain ATCC 19718 / CIP 103999 / KCTC 2705 / NBRC 14298)).